A 67-amino-acid polypeptide reads, in one-letter code: Brevinin-1CDYc (67 aa).

A signal peptide spans 1–22 (MFTLKKSLLLIFFLGTINLSLC). A propeptide spanning residues 23–45 (EEERNADEEERRDDPEERDVEVE) is cleaved from the precursor. A disulfide bond links cysteine 61 and cysteine 67.

The protein belongs to the frog skin active peptide (FSAP) family. Brevinin subfamily. As to expression, expressed by the skin glands.

The protein localises to the secreted. In terms of biological role, antimicrobial peptide. This is Brevinin-1CDYc from Rana huanrensis (Huanren frog).